A 346-amino-acid polypeptide reads, in one-letter code: Leucine zipper protein 2 (346 aa).

The signal sequence occupies residues 1-19 (MKFSPAHYLLPLLPALVLS). Residues 16–211 (LVLSTRQDYE…QMKAMKETVQ (196 aa)) adopt a coiled-coil conformation. The N-linked (GlcNAc...) asparagine glycan is linked to N133. The tract at residues 164-192 (LRYGKKDLLFKAQQLTDLEQKLAVAKNEL) is leucine-zipper. Residues 225 to 346 (ALSLITSNPT…GMAAREEKIL (122 aa)) form a disordered region. Low complexity predominate over residues 250-261 (AAAKSKPQQSAS). Over residues 262 to 283 (GNNESSQVESTKEGSPSTTACD) the composition is skewed to polar residues. An N-linked (GlcNAc...) asparagine glycan is attached at N264. Positions 286–298 (DEGRTCSIKHKES) are enriched in basic and acidic residues. An N-linked (GlcNAc...) asparagine glycan is attached at N302.

It is found in the secreted. In Pongo abelii (Sumatran orangutan), this protein is Leucine zipper protein 2 (LUZP2).